Consider the following 345-residue polypeptide: Dihydroorotate dehydrogenase (quinone) (345 aa).

FMN-binding positions include 65 to 69 and Thr89; that span reads AGLDK. Lys69 contributes to the substrate binding site. Residue 114-118 coordinates substrate; the sequence is NRMGF. Asn146 and Asn179 together coordinate FMN. Residue Asn179 coordinates substrate. Ser182 acts as the Nucleophile in catalysis. Position 184 (Asn184) interacts with substrate. FMN contacts are provided by Lys224 and Thr252. 253-254 contributes to the substrate binding site; the sequence is NT. FMN is bound by residues Gly275, Gly304, and 325 to 326; that span reads YT.

The protein belongs to the dihydroorotate dehydrogenase family. Type 2 subfamily. Monomer. It depends on FMN as a cofactor.

It is found in the cell membrane. It carries out the reaction (S)-dihydroorotate + a quinone = orotate + a quinol. The protein operates within pyrimidine metabolism; UMP biosynthesis via de novo pathway; orotate from (S)-dihydroorotate (quinone route): step 1/1. In terms of biological role, catalyzes the conversion of dihydroorotate to orotate with quinone as electron acceptor. This chain is Dihydroorotate dehydrogenase (quinone), found in Janthinobacterium sp. (strain Marseille) (Minibacterium massiliensis).